The following is a 64-amino-acid chain: Short neurotoxin 1 (64 aa).

4 disulfides stabilise this stretch: cysteine 3/cysteine 26, cysteine 20/cysteine 43, cysteine 45/cysteine 56, and cysteine 57/cysteine 62.

Belongs to the three-finger toxin family. Short-chain subfamily. Type I alpha-neurotoxin sub-subfamily. In terms of tissue distribution, expressed by the venom gland.

The protein localises to the secreted. In terms of biological role, binds to muscle nicotinic acetylcholine receptor (nAChR) and inhibit acetylcholine from binding to the receptor, thereby impairing neuromuscular transmission. The chain is Short neurotoxin 1 from Bungarus fasciatus (Banded krait).